The primary structure comprises 325 residues: Acetyl-coenzyme A carboxylase carboxyl transferase subunit alpha (325 aa).

The CoA carboxyltransferase C-terminal domain maps to 35-292 (EINKLEARLE…DDVLKRSLRE (258 aa)).

The protein belongs to the AccA family. In terms of assembly, acetyl-CoA carboxylase is a heterohexamer composed of biotin carboxyl carrier protein (AccB), biotin carboxylase (AccC) and two subunits each of ACCase subunit alpha (AccA) and ACCase subunit beta (AccD).

The protein localises to the cytoplasm. It carries out the reaction N(6)-carboxybiotinyl-L-lysyl-[protein] + acetyl-CoA = N(6)-biotinyl-L-lysyl-[protein] + malonyl-CoA. It functions in the pathway lipid metabolism; malonyl-CoA biosynthesis; malonyl-CoA from acetyl-CoA: step 1/1. In terms of biological role, component of the acetyl coenzyme A carboxylase (ACC) complex. First, biotin carboxylase catalyzes the carboxylation of biotin on its carrier protein (BCCP) and then the CO(2) group is transferred by the carboxyltransferase to acetyl-CoA to form malonyl-CoA. The sequence is that of Acetyl-coenzyme A carboxylase carboxyl transferase subunit alpha from Anoxybacillus flavithermus (strain DSM 21510 / WK1).